The sequence spans 739 residues: Vascular cell adhesion protein 1 (739 aa).

The signal sequence occupies residues 1–24 (MPRKMVVIFGASNILWMVFAVSQA). Ig-like C2-type domains lie at 25–105 (SKME…KKLE), 109–212 (QVEI…KERE), 223–309 (PRNT…LIVQ), 312–399 (PFTV…IKVD), 408–506 (EVEM…QTLY), 511–595 (PRDT…VELI), and 600–684 (PKDI…LTLD). The Extracellular portion of the chain corresponds to 25 to 698 (SKMEIFLEPR…ENNKDYFSPE (674 aa)). 5 cysteine pairs are disulfide-bonded: Cys-47-Cys-95, Cys-52-Cys-99, Cys-137-Cys-195, Cys-246-Cys-291, and Cys-335-Cys-383. N-linked (GlcNAc...) asparagine glycosylation is found at Asn-76 and Asn-77. Asn-273 is a glycosylation site (N-linked (GlcNAc...) asparagine). Residue Asn-531 is glycosylated (N-linked (GlcNAc...) asparagine). An intrachain disulfide couples Cys-534 to Cys-579. A helical membrane pass occupies residues 699 to 720 (LLVLYCASSLIIPAIGMIIYFA). The Cytoplasmic segment spans residues 721–739 (RRANMKGSYSLVEAQKSKV).

In terms of processing, cleaved by the metalloproteinase ADAM17 to generate the soluble form. Sialoglycoprotein. Post-translationally, ubiquitinated by TRIM65 via 'Lys-48'-linked ubiquitination; leading to proteasomal degradation.

The protein resides in the cell membrane. The protein localises to the secreted. In terms of biological role, cell adhesion glycoprotein predominantly expressed on the surface of endothelial cells that plays an important role in immune surveillance and inflammation. Acts as a major regulator of leukocyte adhesion to the endothelium through interaction with different types of integrins. During inflammatory responses, binds ligands on the surface of activated endothelial cells to initiate the activation of calcium channels and the plasma membrane-associated small GTPase RAC1 leading to leukocyte transendothelial migration. Also serves as a quality-control checkpoint for entry into bone marrow by providing a 'don't-eat-me' stamping in the context of major histocompatibility complex (MHC) class-I presentation. The polypeptide is Vascular cell adhesion protein 1 (VCAM1) (Canis lupus familiaris (Dog)).